A 342-amino-acid chain; its full sequence is Platelet-activating factor receptor (342 aa).

The Extracellular portion of the chain corresponds to Met1–Thr16. An N-linked (GlcNAc...) asparagine glycan is attached at Asn4. The chain crosses the membrane as a helical span at residues Leu17–Trp38. At Val39–Ile54 the chain is on the cytoplasmic side. A helical transmembrane segment spans residues Phe55 to Ile74. Over Val75–Asn91 the chain is Extracellular. Cys90 and Cys173 are disulfide-bonded. The chain crosses the membrane as a helical span at residues Leu92–Tyr113. The Cytoplasmic segment spans residues Asn114 to Arg133. A helical membrane pass occupies residues Gly134–Met155. At Asp156–Val184 the chain is on the extracellular side. N-linked (GlcNAc...) asparagine glycosylation is present at Asn169. A helical membrane pass occupies residues Leu185 to Cys205. Over Asn206 to Met233 the chain is Cytoplasmic. A helical membrane pass occupies residues Val234 to Pro254. Residues Trp255–Gln276 are Extracellular-facing. A helical membrane pass occupies residues Val277–Leu296. At Thr297 to Asn342 the chain is on the cytoplasmic side.

The protein belongs to the G-protein coupled receptor 1 family. Interacts with ARRB1.

The protein localises to the cell membrane. Functionally, receptor for platelet activating factor, a chemotactic phospholipid mediator that possesses potent inflammatory, smooth-muscle contractile and hypotensive activity. Seems to mediate its action via a G protein that activates a phosphatidylinositol-calcium second messenger system. The polypeptide is Platelet-activating factor receptor (PTAFR) (Cavia porcellus (Guinea pig)).